We begin with the raw amino-acid sequence, 478 residues long: 3-isopropylmalate dehydratase large subunit (478 aa).

3 residues coordinate [4Fe-4S] cluster: cysteine 359, cysteine 417, and cysteine 420.

The protein belongs to the aconitase/IPM isomerase family. LeuC type 1 subfamily. As to quaternary structure, heterodimer of LeuC and LeuD. The cofactor is [4Fe-4S] cluster.

It carries out the reaction (2R,3S)-3-isopropylmalate = (2S)-2-isopropylmalate. It functions in the pathway amino-acid biosynthesis; L-leucine biosynthesis; L-leucine from 3-methyl-2-oxobutanoate: step 2/4. In terms of biological role, catalyzes the isomerization between 2-isopropylmalate and 3-isopropylmalate, via the formation of 2-isopropylmaleate. This Anaeromyxobacter sp. (strain Fw109-5) protein is 3-isopropylmalate dehydratase large subunit.